The chain runs to 462 residues: Cysteine--tRNA ligase (462 aa).

C27 contacts Zn(2+). The 'HIGH' region signature appears at 29 to 39 (PTVYDLAHIGN). Positions 211, 236, and 240 each coordinate Zn(2+). The short motif at 270–274 (KMSKS) is the 'KMSKS' region element. Position 273 (K273) interacts with ATP.

Belongs to the class-I aminoacyl-tRNA synthetase family. In terms of assembly, monomer. The cofactor is Zn(2+).

It is found in the cytoplasm. The catalysed reaction is tRNA(Cys) + L-cysteine + ATP = L-cysteinyl-tRNA(Cys) + AMP + diphosphate. This chain is Cysteine--tRNA ligase, found in Anaplasma phagocytophilum (strain HZ).